Consider the following 264-residue polypeptide: UPF0162 protein PM0557 (264 aa).

Belongs to the UPF0162 family.

The protein is UPF0162 protein PM0557 of Pasteurella multocida (strain Pm70).